A 326-amino-acid polypeptide reads, in one-letter code: tRNA-modifying protein YgfZ (326 aa).

Residues W27 and W189 each coordinate folate.

It belongs to the tRNA-modifying YgfZ family.

The protein localises to the cytoplasm. Folate-binding protein involved in regulating the level of ATP-DnaA and in the modification of some tRNAs. It is probably a key factor in regulatory networks that act via tRNA modification, such as initiation of chromosomal replication. The chain is tRNA-modifying protein YgfZ from Shigella dysenteriae serotype 1 (strain Sd197).